The chain runs to 234 residues: UDP-2,3-diacylglucosamine hydrolase (234 aa).

D9, H11, D42, N80, and H115 together coordinate Mn(2+). 80 to 81 is a binding site for substrate; the sequence is NR. Substrate is bound by residues D123, S161, K165, K168, and H196. The Mn(2+) site is built by H196 and H198.

Belongs to the LpxH family. Mn(2+) is required as a cofactor.

It is found in the cell inner membrane. It catalyses the reaction UDP-2-N,3-O-bis[(3R)-3-hydroxytetradecanoyl]-alpha-D-glucosamine + H2O = 2-N,3-O-bis[(3R)-3-hydroxytetradecanoyl]-alpha-D-glucosaminyl 1-phosphate + UMP + 2 H(+). The protein operates within glycolipid biosynthesis; lipid IV(A) biosynthesis; lipid IV(A) from (3R)-3-hydroxytetradecanoyl-[acyl-carrier-protein] and UDP-N-acetyl-alpha-D-glucosamine: step 4/6. Functionally, hydrolyzes the pyrophosphate bond of UDP-2,3-diacylglucosamine to yield 2,3-diacylglucosamine 1-phosphate (lipid X) and UMP by catalyzing the attack of water at the alpha-P atom. Involved in the biosynthesis of lipid A, a phosphorylated glycolipid that anchors the lipopolysaccharide to the outer membrane of the cell. This chain is UDP-2,3-diacylglucosamine hydrolase, found in Histophilus somni (strain 2336) (Haemophilus somnus).